An 849-amino-acid chain; its full sequence is BRCT-containing protein 1 (849 aa).

BRCT domains lie at 1 to 75 (MLAA…FYSC), 76 to 167 (NPYL…PYLF), and 282 to 370 (PSVG…DFPV). Disordered regions lie at residues 453–519 (QSAD…ASSD) and 606–632 (KKRR…NTNA). The span at 480 to 493 (ELQDEGRLEIDAKS) shows a compositional bias: basic and acidic residues. BRCT domains lie at 625–715 (SESR…PYLL) and 738–843 (QGPS…RIAD).

Interacts with gammaH2A; binds phosphohistone H2A (gammaH2A) formed by Rad3/ATR checkpoint kinase at DNA lesions. Interacts with Rhp18/Rad18. Interacts with Nse5-Nse6; this allows to tether Smc5-Smc6 at replicative DNA lesions.

The protein resides in the nucleus. It is found in the chromosome. Required for resumption of chromosome replication after DNA damage, specifically in S phase. Is recruited to chromatin in response to stalled replication forks and acts as a scaffold during DNA repair. Required for the accumulation of the Smc5-Smc6 genome stability complex in foci during replication stress and for activation of the intrinsic SUMO ligase activity of the complex by collapsed replication forks. In pericentromeric heterochromatin, enhances Clr4/Suv39-mediated H3 Lys-9 dimethylation (H3K9me2), required for stabilization of stalled replication forks and accurate chromosome segregation during mitosis. Functionally, required for mitotic fidelity, specifically in the G2 phase of the cell cycle. Plays a role in chromatin organization. This chain is BRCT-containing protein 1 (brc1), found in Schizosaccharomyces pombe (strain 972 / ATCC 24843) (Fission yeast).